We begin with the raw amino-acid sequence, 165 residues long: Transcription antitermination protein NusB (165 aa).

The tract at residues 1-27 (MISDDTDQFNPRDAKSPEIAKGKSAKR) is disordered. Residues 10–21 (NPRDAKSPEIAK) are compositionally biased toward basic and acidic residues.

This sequence belongs to the NusB family.

Involved in transcription antitermination. Required for transcription of ribosomal RNA (rRNA) genes. Binds specifically to the boxA antiterminator sequence of the ribosomal RNA (rrn) operons. The sequence is that of Transcription antitermination protein NusB from Pseudomonas syringae pv. tomato (strain ATCC BAA-871 / DC3000).